The primary structure comprises 1014 residues: Klotho (1014 aa).

The signal sequence occupies residues 1–34 (MPARAPPRRLPRLLLLRLLSLHLLLLTLRARCLS). The Extracellular segment spans residues 35 to 983 (AEPGQGAQTW…GCGFFQTRKS (949 aa)). Glycosyl hydrolase-1 stretches follow at residues 59-508 (LHDT…NNGF) and 517-955 (LEGT…NNGF). N161, N285, N346, N609, N614, and N696 each carry an N-linked (GlcNAc...) asparagine glycan. Residues 984 to 1004 (LLAFISFLVFAFVTSLALIYY) form a helical membrane-spanning segment. At 1005–1014 (YSKKGRRRYK) the chain is on the cytoplasmic side.

Belongs to the glycosyl hydrolase 1 family. Klotho subfamily. In terms of assembly, homodimer. Interacts with FGF23 and FGFR1. In terms of processing, N-glycosylated. Present in cortical renal tubules and the parathyroid (at protein level). Strongly expressed in kidney. Expressed at low levels in brain, lung, intestine and ovaries.

Its subcellular location is the cell membrane. It localises to the apical cell membrane. The protein localises to the secreted. The catalysed reaction is a beta-D-glucuronoside + H2O = D-glucuronate + an alcohol. Its function is as follows. May have weak glycosidase activity towards glucuronylated steroids. However, it lacks essential active site Glu residues at positions 241 and 874, suggesting it may be inactive as a glycosidase in vivo. May be involved in the regulation of calcium and phosphorus homeostasis by inhibiting the synthesis of active vitamin D. Essential factor for the specific interaction between FGF23 and FGFR1. In terms of biological role, the Klotho peptide generated by cleavage of the membrane-bound isoform may be an anti-aging circulating hormone which would extend life span by inhibiting insulin/IGF1 signaling. This is Klotho (Kl) from Rattus norvegicus (Rat).